A 674-amino-acid polypeptide reads, in one-letter code: L-type lectin-domain containing receptor kinase IV.3 (674 aa).

The signal sequence occupies residues 1 to 22 (MFFKLFTIFFFFIILLSKPLNS). 6 N-linked (GlcNAc...) asparagine glycosylation sites follow: Asn21, Asn28, Asn40, Asn81, Asn136, and Asn188. Topologically, residues 23–296 (SSQSLNFTYN…TSLQRFYKNR (274 aa)) are extracellular. Residues 26–263 (SLNFTYNSFH…SEHFVFGWSF (238 aa)) are legume-lectin like. The chain crosses the membrane as a helical span at residues 297 to 317 (MPLFSLLLIPVLFVVSLIFLV). Topologically, residues 318–674 (RFIVRRRRKF…IAYSIVSGGR (357 aa)) are cytoplasmic. The Protein kinase domain maps to 355–632 (FKDKDLLGSG…LQYLRGDATL (278 aa)). ATP-binding positions include 361–369 (LGSGGFGRV) and Lys384. Asp480 serves as the catalytic Proton acceptor.

It in the C-terminal section; belongs to the protein kinase superfamily. Ser/Thr protein kinase family. In the N-terminal section; belongs to the leguminous lectin family.

The protein localises to the cell membrane. The enzyme catalyses L-seryl-[protein] + ATP = O-phospho-L-seryl-[protein] + ADP + H(+). It catalyses the reaction L-threonyl-[protein] + ATP = O-phospho-L-threonyl-[protein] + ADP + H(+). This Arabidopsis thaliana (Mouse-ear cress) protein is L-type lectin-domain containing receptor kinase IV.3 (LECRK43).